Here is a 363-residue protein sequence, read N- to C-terminus: Ribosomal RNA large subunit methyltransferase M (363 aa).

Residues Ser194, 227–230 (CPGG), Asp246, Asp266, and Asp284 each bind S-adenosyl-L-methionine. Catalysis depends on Lys313, which acts as the Proton acceptor.

This sequence belongs to the class I-like SAM-binding methyltransferase superfamily. RNA methyltransferase RlmE family. RlmM subfamily. In terms of assembly, monomer.

The protein localises to the cytoplasm. It catalyses the reaction cytidine(2498) in 23S rRNA + S-adenosyl-L-methionine = 2'-O-methylcytidine(2498) in 23S rRNA + S-adenosyl-L-homocysteine + H(+). In terms of biological role, catalyzes the 2'-O-methylation at nucleotide C2498 in 23S rRNA. The protein is Ribosomal RNA large subunit methyltransferase M of Haemophilus influenzae (strain ATCC 51907 / DSM 11121 / KW20 / Rd).